Reading from the N-terminus, the 342-residue chain is tRNA N6-adenosine threonylcarbamoyltransferase (342 aa).

Positions 115 and 119 each coordinate Fe cation. Substrate-binding positions include 138-142, D171, G184, and N276; that span reads LVSGG. D304 is a binding site for Fe cation.

This sequence belongs to the KAE1 / TsaD family. The cofactor is Fe(2+).

It localises to the cytoplasm. The enzyme catalyses L-threonylcarbamoyladenylate + adenosine(37) in tRNA = N(6)-L-threonylcarbamoyladenosine(37) in tRNA + AMP + H(+). Functionally, required for the formation of a threonylcarbamoyl group on adenosine at position 37 (t(6)A37) in tRNAs that read codons beginning with adenine. Is involved in the transfer of the threonylcarbamoyl moiety of threonylcarbamoyl-AMP (TC-AMP) to the N6 group of A37, together with TsaE and TsaB. TsaD likely plays a direct catalytic role in this reaction. The sequence is that of tRNA N6-adenosine threonylcarbamoyltransferase from Dichelobacter nodosus (strain VCS1703A).